We begin with the raw amino-acid sequence, 119 residues long: DNA-binding protein inhibitor ID-3 (119 aa).

Residues 28–80 form the bHLH domain; that stretch reads RGKGPAAEEPLSLLDDMNHCYSRLRELVPGVPRGTQLSQVEILQRVIDYILDL.

Homodimer, and heterodimer with other HLH proteins. Interacts with COPS5 and COPS7A. Interacts with IFI204. Interacts with GATA4 and NKX2-5. Interacts with ANKRD2; both proteins cooperate in myoblast differentiation. Interacts with CLOCK and BMAL1. In terms of tissue distribution, expressed abundantly in lung, kidney and adrenal gland, but not in adult brain.

Its subcellular location is the nucleus. Its function is as follows. Transcriptional regulator (lacking a basic DNA binding domain) which negatively regulates the basic helix-loop-helix (bHLH) transcription factors by forming heterodimers and inhibiting their DNA binding and transcriptional activity. Implicated in regulating a variety of cellular processes, including cellular growth, senescence, differentiation, apoptosis, angiogenesis, and neoplastic transformation. Involved in myogenesis by inhibiting skeletal muscle and cardiac myocyte differentiation and promoting muscle precursor cells proliferation. Inhibits the binding of E2A-containing protein complexes to muscle creatine kinase E-box enhancer. Regulates the circadian clock by repressing the transcriptional activator activity of the CLOCK-BMAL1 heterodimer. In Homo sapiens (Human), this protein is DNA-binding protein inhibitor ID-3 (ID3).